A 157-amino-acid polypeptide reads, in one-letter code: MIRLVTLAALPVLVLCQFDPSKWFMGSNLGGLQGFGALPARCLKYLEPGLSRGNRPPSHRFFFNSTSGNCEQFVYYGRGGNRNNFRDVFKCMKSCGCKQQRNGGVPCNPPSQPVIRYYYDTFTKLCNTFQHTGCGGNSNHFKEWNDCFFTCGSGFEW.

A signal peptide spans 1-16; the sequence is MIRLVTLAALPVLVLC. 2 BPTI/Kunitz inhibitor domains span residues 42-95 and 97-151; these read CLKY…MKSC and CKQQ…FFTC. 5 cysteine pairs are disulfide-bonded: cysteine 42–cysteine 95, cysteine 70–cysteine 91, cysteine 97–cysteine 151, cysteine 107–cysteine 134, and cysteine 126–cysteine 147.

As to expression, nacreous layer of shell (at protein level).

The protein localises to the secreted. The polypeptide is BPTI/Kunitz domain-containing protein 3 (Margaritifera margaritifera (Freshwater pearl mussel)).